The primary structure comprises 519 residues: Serine/threonine-protein kinase RIO3 (519 aa).

Residues S8 and S112 each carry the phosphoserine modification. The tract at residues 121–159 (PYEDSDSSEDEVDWQDTRDDPYRPAKPVPTPKKGFIGKG) is disordered. At Y122 the chain carries Phosphotyrosine. Positions 124–134 (DSDSSEDEVDW) are enriched in acidic residues. 3 positions are modified to phosphoserine: S125, S127, and S128. One can recognise a Protein kinase domain in the interval 251-519 (ETITGCISTG…DGDPPLLYDE (269 aa)). ATP is bound by residues 257-265 (ISTGKESVV) and K290. Catalysis depends on D406, which acts as the Proton acceptor.

It belongs to the protein kinase superfamily. RIO-type Ser/Thr kinase family. As to quaternary structure, interacts with CASP10. Interacts with IRF3; RIOK3 probably mediates the interaction of TBK1 with IRF3. Associated with 40S pre-ribosomal particles. It depends on Mg(2+) as a cofactor. Autophosphorylated (in vitro). In terms of tissue distribution, widely expressed.

It is found in the cytoplasm. The enzyme catalyses L-seryl-[protein] + ATP = O-phospho-L-seryl-[protein] + ADP + H(+). The catalysed reaction is L-threonyl-[protein] + ATP = O-phospho-L-threonyl-[protein] + ADP + H(+). Functionally, involved in regulation of type I interferon (IFN)-dependent immune response which plays a critical role in the innate immune response against DNA and RNA viruses. May act as an adapter protein essential for the recruitment of TBK1 to IRF3. Phosphorylates IFIH1 on 'Ser-828' interfering with IFIH1 filament assembly on long dsRNA and resulting in attenuated IFIH1-signaling. Can inhibit CASP10 isoform 7-mediated activation of the NF-kappaB signaling pathway. May play a role in the biogenesis of the 40S ribosomal subunit. Involved in the processing of 21S pre-rRNA to the mature 18S rRNA. The sequence is that of Serine/threonine-protein kinase RIO3 (RIOK3) from Homo sapiens (Human).